Here is a 491-residue protein sequence, read N- to C-terminus: Monodehydroascorbate reductase 5, chlorplastic (491 aa).

The N-terminal 42 residues, M1–S42, are a transit peptide targeting the chloroplast. FAD contacts are provided by residues G61–A64, E88, R95, K100, and R194–D195. NAD(+) contacts are provided by residues G217–E223, E241, R247, and G306. Y219–E223 provides a ligand contact to NADP(+). Residues R247 and G306 each coordinate NADP(+). D344 provides a ligand contact to FAD. NAD(+) is bound at residue E360–H361. Residue E360–H361 participates in NADP(+) binding. V362 is an FAD binding site. R366 provides a ligand contact to L-ascorbate. Position 391 (Y391) interacts with FAD. Y391 contributes to the NAD(+) binding site. Position 391 (Y391) interacts with NADP(+). R393 serves as a coordination point for L-ascorbate.

This sequence belongs to the FAD-dependent oxidoreductase family. The cofactor is FAD.

The protein resides in the plastid. The protein localises to the chloroplast. It carries out the reaction 2 monodehydro-L-ascorbate radical + NADH + H(+) = 2 L-ascorbate + NAD(+). Functionally, catalyzes the conversion of monodehydroascorbate to ascorbate, oxidizing NADH in the process. Ascorbate is a major antioxidant against reactive oxygen species (ROS) and nitric oxide (NO). This is Monodehydroascorbate reductase 5, chlorplastic from Oryza sativa subsp. japonica (Rice).